Reading from the N-terminus, the 524-residue chain is Nif-specific regulatory protein (524 aa).

Residues Met1–Pro182 are a domain. Residues Glu35–Ile176 enclose the GAF domain. One can recognise a Sigma-54 factor interaction domain in the interval Met212–Glu481. Residues Gly240–Glu247 and Ala303–Glu312 each bind ATP. The interval Arg482 to Leu524 is C-terminal DNA-binding domain. A DNA-binding region (H-T-H motif) is located at residues Gln496–Gln515.

Interacts with sigma-54.

Functionally, required for activation of most nif operons, which are directly involved in nitrogen fixation. This is Nif-specific regulatory protein (nifA) from Klebsiella oxytoca.